Consider the following 185-residue polypeptide: MIENIKKDAQERMGKCVDATKNQMAKVRTGRAHPSLLDSIQVSYYGTMTPLNQVANVGVEDSRTLSVTVFDRSAIQAVEKAIMSSDLGLNPMSAGATLRIPLPALTEERRKDFIKVVRAEAEGGRVAIRNVRRDAISEVKKLEKAKECTEDDVRRFEDDVQKFTDAHIKKVDEILAAKEIELMEV.

This sequence belongs to the RRF family.

It is found in the cytoplasm. Functionally, responsible for the release of ribosomes from messenger RNA at the termination of protein biosynthesis. May increase the efficiency of translation by recycling ribosomes from one round of translation to another. This is Ribosome-recycling factor from Shewanella sp. (strain W3-18-1).